The following is a 415-amino-acid chain: Protein fuzzy homolog (415 aa).

The protein belongs to the fuzzy family. Component of the CPLANE (ciliogenesis and planar polarity effectors) complex, composed of INTU, FUZ and WDPCP. Interacts with CPLANE1 and CPLANE2.

It is found in the cytoplasm. The protein localises to the cytoskeleton. It localises to the cilium basal body. Its function is as follows. Probable planar cell polarity effector involved in cilium biogenesis. Proposed to function as core component of the CPLANE (ciliogenesis and planar polarity effectors) complex involved in the recruitment of peripheral IFT-A proteins to basal bodies. May regulate protein and membrane transport to the cilium. May regulate the morphogenesis of hair follicles which depends on functional primary cilia. Binds phosphatidylinositol 3-phosphate with highest affinity, followed by phosphatidylinositol 4-phosphate and phosphatidylinositol 5-phosphate. The protein is Protein fuzzy homolog (Fuz) of Rattus norvegicus (Rat).